Reading from the N-terminus, the 323-residue chain is Beta-ketoacyl-[acyl-carrier-protein] synthase III (323 aa).

Catalysis depends on residues Cys-113 and His-250. An ACP-binding region spans residues 251–255 (QANKR). Asn-280 is an active-site residue.

Belongs to the thiolase-like superfamily. FabH family. In terms of assembly, homodimer.

Its subcellular location is the cytoplasm. The catalysed reaction is malonyl-[ACP] + acetyl-CoA + H(+) = 3-oxobutanoyl-[ACP] + CO2 + CoA. The protein operates within lipid metabolism; fatty acid biosynthesis. In terms of biological role, catalyzes the condensation reaction of fatty acid synthesis by the addition to an acyl acceptor of two carbons from malonyl-ACP. Catalyzes the first condensation reaction which initiates fatty acid synthesis and may therefore play a role in governing the total rate of fatty acid production. Possesses both acetoacetyl-ACP synthase and acetyl transacylase activities. Its substrate specificity determines the biosynthesis of branched-chain and/or straight-chain of fatty acids. The polypeptide is Beta-ketoacyl-[acyl-carrier-protein] synthase III (Brucella melitensis biotype 2 (strain ATCC 23457)).